Reading from the N-terminus, the 1468-residue chain is Potassium channel K2 (1468 aa).

Transmembrane regions (helical) follow at residues 48–68 (MIYI…YWIY), 146–165 (FNCY…WYIS), 185–209 (IYIY…IISY), 221–240 (LLID…RHFF), 246–264 (IDIY…FLNV), and 285–306 (IILG…IQGI). The segment at residues 326–344 (YFYFSIISISTVGYGDIIP) is an intramembrane region (pore-forming). A helical transmembrane segment spans residues 351-368 (VICIFFIFWTFIWVPIQF). The segment at 804 to 823 (TCARTNESHKNNRLRSRRSQ) is disordered. Residues 814 to 823 (NNRLRSRRSQ) show a composition bias toward basic residues. Positions 1141–1185 (KSNKNSNNNNKCEQIKQLNNNLTFKKNEKKTKSNKQNTNDTLERR) form a coiled coil.

Its subcellular location is the membrane. Its function is as follows. May be involved in transmembrane potassium transport at the subcellular level not affecting bulk potassium transport across the plasma membrane. This chain is Potassium channel K2, found in Plasmodium berghei (strain Anka).